The sequence spans 138 residues: MRTLWIMAVLLVGVEGSLVQFETLIMKIAGRSGVWYYGSYGCYCGSGGQGRPQDASDRCCFVHDCCYGKVTDCDPKADVYTYSEENGVVVCGGDDPCKKQICECDRVAATCFRDNKDTYDNKYWFFPAKNCQEESEPC.

Residues 1 to 16 (MRTLWIMAVLLVGVEG) form the signal peptide. 7 disulfide bridges follow: C42/C131, C44/C60, C59/C111, C65/C138, C66/C104, C73/C97, and C91/C102. Ca(2+) is bound by residues Y43, G45, and G47. H63 is a catalytic residue. D64 contacts Ca(2+). The active site involves D105.

Belongs to the phospholipase A2 family. Group II subfamily. D49 sub-subfamily. It depends on Ca(2+) as a cofactor. In terms of tissue distribution, expressed by the venom gland.

It localises to the secreted. It catalyses the reaction a 1,2-diacyl-sn-glycero-3-phosphocholine + H2O = a 1-acyl-sn-glycero-3-phosphocholine + a fatty acid + H(+). Its function is as follows. Snake venom phospholipase A2 that shows a potent inhibition of human platelet aggregation. This inhibition is concentration-dependent when aggregation is induced by collagen, and concentration-independent when aggregation is induced by arachidonic acid. In human umbilical-cord vein endothelial cells, this toxin stimulates endothelial cells to release prostaglandin I(2), suggesting an increase of its potential anti-platelet activity in vivo. PLA2 catalyzes the calcium-dependent hydrolysis of the 2-acyl groups in 3-sn-phosphoglycerides. The polypeptide is Acidic phospholipase A2 BE-I-PLA2 (Bothrops erythromelas (Caatinga lance head)).